The sequence spans 489 residues: MTAELLVNVTPSETRVAYIDGGILQEIHIEREARRGIVGNIYKGRVSRVLPGMQAAFVDIGLDKAAFLHASDIMPHTECVAGDEQKQFTVRDISELVRQGQDLMVQVVKDPLGTKGARLTTDITLPSRYLVFMPGASHVGVSQRIESESERERLKKVVAEYCDEQGGFIIRTAAEGVCEEDLASDAAYLKRVWTKVMERKKRPQTRYQMYGELALAQRVLRDFADAQLDRIRVDSRLTYESLLEFTAEYIPEMTSKLEHYSGHQPIFDLYDVENEIQRALERKVELKSGGYLIIDQTEAMTTVDINTGAFVGHRNLDDTIFNTNIEATQAIARQLRLRNLGGIIIIDFIDMNNEDHRRRVLHSLEQALSKDRVKTSINGFSPLGLVEMTRKRTRESVEHVLCNECPTCHGRGTVKTVETVCYEIMREIVRVHHAYDSDRFLVYASPAVAEALKGEESHALAEVEIFVGKQVKVQVEPLYNQEQFDVVMM.

Residues 39-128 (GNIYKGRVSR…LTTDITLPSR (90 aa)) enclose the S1 motif domain. Positions 304 and 347 each coordinate Mg(2+).

This sequence belongs to the RNase E/G family. RNase G subfamily. Homodimer, and possible higher multimers. Requires Mg(2+) as cofactor.

The protein resides in the cytoplasm. Functionally, acts in the processing of the 5'-end of precursors of 16S rRNA. Confers adaptive resistance to aminoglycoside antibiotics through modulation of 16S rRNA processing. An endoribonuclease, it prefers 5'-monophosphorylated substrates and cleaves single-stranded sites rich in A and U residues; also contributes to 23S rRNA processing, tRNA processing and mRNA turnover. Involved in decay of speF mRNA, has a preference for adenine nucleotides. This Salmonella typhimurium (strain SL1344) protein is Ribonuclease G.